The sequence spans 256 residues: DNA repair protein RecO (256 aa).

This sequence belongs to the RecO family.

Functionally, involved in DNA repair and RecF pathway recombination. In Rhizobium etli (strain CIAT 652), this protein is DNA repair protein RecO.